Reading from the N-terminus, the 702-residue chain is Elongation factor G 1 (702 aa).

The tr-type G domain maps to Glu-8–Val-290. GTP-binding positions include Ala-17–Thr-24, Asp-88–His-92, and Asn-142–Asp-145.

The protein belongs to the TRAFAC class translation factor GTPase superfamily. Classic translation factor GTPase family. EF-G/EF-2 subfamily.

It localises to the cytoplasm. Catalyzes the GTP-dependent ribosomal translocation step during translation elongation. During this step, the ribosome changes from the pre-translocational (PRE) to the post-translocational (POST) state as the newly formed A-site-bound peptidyl-tRNA and P-site-bound deacylated tRNA move to the P and E sites, respectively. Catalyzes the coordinated movement of the two tRNA molecules, the mRNA and conformational changes in the ribosome. In Cupriavidus pinatubonensis (strain JMP 134 / LMG 1197) (Cupriavidus necator (strain JMP 134)), this protein is Elongation factor G 1.